Here is a 594-residue protein sequence, read N- to C-terminus: UvrABC system protein C (594 aa).

Positions 13 to 99 (HSSGVYQYFD…IKQLKPKYNI (87 aa)) constitute a GIY-YIG domain. Residues 205–240 (DKLIKELELKMERLSNNLRFEEALIYRDRIAKIQKI) enclose the UVR domain.

The protein belongs to the UvrC family. In terms of assembly, interacts with UvrB in an incision complex.

It is found in the cytoplasm. In terms of biological role, the UvrABC repair system catalyzes the recognition and processing of DNA lesions. UvrC both incises the 5' and 3' sides of the lesion. The N-terminal half is responsible for the 3' incision and the C-terminal half is responsible for the 5' incision. The sequence is that of UvrABC system protein C from Helicobacter pylori (strain Shi470).